Consider the following 63-residue polypeptide: Large ribosomal subunit protein bL35 (63 aa).

Residues 1 to 43 show a composition bias toward basic residues; it reads MKMRTHSGAKKRLKVLSSGKVKKKSTRMRHLNSHMSSKTKRQL. The interval 1–45 is disordered; sequence MKMRTHSGAKKRLKVLSSGKVKKKSTRMRHLNSHMSSKTKRQLGK.

Belongs to the bacterial ribosomal protein bL35 family.

This is Large ribosomal subunit protein bL35 from Bdellovibrio bacteriovorus (strain ATCC 15356 / DSM 50701 / NCIMB 9529 / HD100).